The chain runs to 342 residues: Phosphate acyltransferase (342 aa).

It belongs to the PlsX family. Homodimer. Probably interacts with PlsY.

Its subcellular location is the cytoplasm. It catalyses the reaction a fatty acyl-[ACP] + phosphate = an acyl phosphate + holo-[ACP]. It participates in lipid metabolism; phospholipid metabolism. Its function is as follows. Catalyzes the reversible formation of acyl-phosphate (acyl-PO(4)) from acyl-[acyl-carrier-protein] (acyl-ACP). This enzyme utilizes acyl-ACP as fatty acyl donor, but not acyl-CoA. The sequence is that of Phosphate acyltransferase from Shewanella baltica (strain OS155 / ATCC BAA-1091).